Reading from the N-terminus, the 426-residue chain is Bone morphogenetic protein 7 (426 aa).

The signal sequence occupies residues 1 to 22; the sequence is MNALTVKRRLPVLLFLFHISLS. Residues 23–282 constitute a propeptide that is removed on maturation; the sequence is SISSNTILEN…TSDIHLRSVR (260 aa). N-linked (GlcNAc...) asparagine glycans are attached at residues Asn-177, Asn-307, and Asn-367. 3 cysteine pairs are disulfide-bonded: Cys-325–Cys-391, Cys-354–Cys-423, and Cys-358–Cys-425.

The protein belongs to the TGF-beta family. In terms of assembly, homodimer; disulfide-linked. Interacts with twsg1.

It is found in the secreted. Functionally, growth factor of the TGF-beta superfamily that plays important role in various biological processes, including embryogenesis, hematopoiesis, neurogenesis and skeletal morphogenesis. Initiates the canonical BMP signaling cascade by associating with type I receptor ACVR1 and type II receptor ACVR2A. Once all three components are bound together in a complex at the cell surface, ACVR2A phosphorylates and activates ACVR1. In turn, ACVR1 propagates signal by phosphorylating SMAD1/5/8 that travel to the nucleus and act as activators and repressors of transcription of target genes. In Xenopus laevis (African clawed frog), this protein is Bone morphogenetic protein 7 (bmp7).